The primary structure comprises 287 residues: Succinate--CoA ligase [ADP-forming] subunit alpha 2 (287 aa).

CoA contacts are provided by residues 17–20 (TGYQ), lysine 43, and 96–98 (ITE). Tyrosine 159 lines the substrate pocket. Catalysis depends on histidine 246, which acts as the Tele-phosphohistidine intermediate.

It belongs to the succinate/malate CoA ligase alpha subunit family. As to quaternary structure, heterotetramer of two alpha and two beta subunits.

The catalysed reaction is succinate + ATP + CoA = succinyl-CoA + ADP + phosphate. The enzyme catalyses GTP + succinate + CoA = succinyl-CoA + GDP + phosphate. The protein operates within carbohydrate metabolism; tricarboxylic acid cycle; succinate from succinyl-CoA (ligase route): step 1/1. Its function is as follows. Succinyl-CoA synthetase functions in the citric acid cycle (TCA), coupling the hydrolysis of succinyl-CoA to the synthesis of either ATP or GTP and thus represents the only step of substrate-level phosphorylation in the TCA. The alpha subunit of the enzyme binds the substrates coenzyme A and phosphate, while succinate binding and nucleotide specificity is provided by the beta subunit. This chain is Succinate--CoA ligase [ADP-forming] subunit alpha 2, found in Archaeoglobus fulgidus (strain ATCC 49558 / DSM 4304 / JCM 9628 / NBRC 100126 / VC-16).